The chain runs to 341 residues: Barley B recombinant-like protein A (341 aa).

Over residues 48 to 62 (HQHQQHVPHHHHQPH) the composition is skewed to basic residues. Disordered regions lie at residues 48–95 (HQHQ…MNFA) and 150–234 (MQQQ…RKNI). Residues 68 to 77 (GANGNANGGA) show a composition bias toward low complexity. Residues 78-90 (MPPPPATEAPPSM) show a composition bias toward pro residues. Over residues 190–211 (PKKRQQGRQPKVPRAKKPKKSA) the composition is skewed to basic residues.

This sequence belongs to the BBR/BPC family.

The protein localises to the nucleus. In terms of biological role, transcriptional regulator that specifically binds to GA-rich elements (GAGA-repeats) present in regulatory sequences of genes involved in developmental processes. This Oryza sativa subsp. japonica (Rice) protein is Barley B recombinant-like protein A.